Consider the following 581-residue polypeptide: La-related protein 7 (581 aa).

Methionine 1 is subject to N-acetylmethionine. Residues 1 to 10 (METESGNQKN) are compositionally biased toward polar residues. Disordered stretches follow at residues 1 to 28 (METE…KKKR), 188 to 368 (NPPE…ERHK), and 410 to 440 (KSES…CPTQ). Positions 28 to 122 (RSRVKQVLAD…KPLGERPKDE (95 aa)) constitute an HTH La-type RNA-binding domain. In terms of domain architecture, RRM spans 125-203 (RTVYVELLPK…PRKPGIFPKT (79 aa)). Over residues 219-228 (KKKKKKKGRM) the composition is skewed to basic residues. The span at 229-240 (KKEDNVQAKEEN) shows a compositional bias: basic and acidic residues. Residue lysine 237 forms a Glycyl lysine isopeptide (Lys-Gly) (interchain with G-Cter in SUMO2) linkage. A Phosphothreonine modification is found at threonine 257. A phosphoserine mark is found at serine 258, serine 261, serine 273, serine 298, serine 299, and serine 300. Residues 316 to 335 (IQKDIIKEPSEASKENRDIE) are compositionally biased toward basic and acidic residues. Position 337 is a phosphoserine (serine 337). Threonine 338 bears the Phosphothreonine mark. At serine 351 the chain carries Phosphoserine. Residues 354–367 (KTKRKHKKKHKERH) are compositionally biased toward basic residues. A Glycyl lysine isopeptide (Lys-Gly) (interchain with G-Cter in SUMO2) cross-link involves residue lysine 410. The region spanning 449–562 (QFVSGVIVKI…TEKLITKAEK (114 aa)) is the xRRM domain.

This sequence belongs to the LARP7 family. Core component of the 7SK RNP complex, at least composed of 7SK RNA, LARP7, MEPCE, HEXIM1 (or HEXIM2) and P-TEFb (composed of CDK9 and CCNT1/cyclin-T1). Interacts with METTL16. Interacts with RBM7; upon genotoxic stress this interaction is enhanced, triggering the release of inactive P-TEFb complex from the core, yielding to P-TEFb complex activation. Associates with box C/D small nucleolar ribonucleoprotein (snoRNP) complexes.

The protein localises to the nucleus. Its subcellular location is the nucleoplasm. Functionally, RNA-binding protein that specifically binds distinct small nuclear RNA (snRNAs) and regulates their processing and function. Specifically binds the 7SK snRNA (7SK RNA) and acts as a core component of the 7SK ribonucleoprotein (RNP) complex, thereby acting as a negative regulator of transcription elongation by RNA polymerase II. The 7SK RNP complex sequesters the positive transcription elongation factor b (P-TEFb) in a large inactive 7SK RNP complex preventing RNA polymerase II phosphorylation and subsequent transcriptional elongation. The 7SK RNP complex also promotes snRNA gene transcription by RNA polymerase II via interaction with the little elongation complex (LEC). LARP7 specifically binds to the highly conserved 3'-terminal U-rich stretch of 7SK RNA; on stimulation, remains associated with 7SK RNA, whereas P-TEFb is released from the complex. LARP7 also acts as a regulator of mRNA splicing fidelity by promoting U6 snRNA processing. Specifically binds U6 snRNAs and associates with a subset of box C/D RNP complexes: promotes U6 snRNA 2'-O-methylation by facilitating U6 snRNA loading into box C/D RNP complexes. U6 snRNA 2'-O-methylation is required for mRNA splicing fidelity. Binds U6 snRNAs with a 5'-CAGGG-3' sequence motif. U6 snRNA processing is required for spermatogenesis. In Macaca fascicularis (Crab-eating macaque), this protein is La-related protein 7.